A 426-amino-acid polypeptide reads, in one-letter code: Protein sum2 (426 aa).

Positions 1 to 80 (MTEFIGSRIS…VKDLRIEEPA (80 aa)) constitute a Sm domain. Disordered regions lie at residues 79 to 100 (PATT…IGSN), 204 to 305 (GMPS…AKPR), and 348 to 426 (SCES…ANDQ). A compositionally biased stretch (pro residues) spans 84-93 (SAPPVQPPND). Over residues 226 to 237 (VSASPSLQSMPP) the composition is skewed to polar residues. The segment covering 261-278 (RNSTVTNDRVVNTTVDVS) has biased composition (low complexity). Polar residues predominate over residues 279–298 (QSQTVETSGPSKEVPTTQPD). In terms of domain architecture, DFDF spans 296–332 (QPDASAAKPRTEFDFQTANQKFQSMKDDLLKGKNDEE). Residues 335 to 351 (EFYKPKQSFFDNISCES) carry the FFD box motif. The span at 350–371 (ESKEKGMEAADRRALRDRERSL) shows a compositional bias: basic and acidic residues. Positions 360–380 (DRRALRDRERSLNMETFGVAG) match the TFG box motif. Residues 384 to 401 (RGRRGRGRGRGGRGRGRG) are compositionally biased toward basic residues. A compositionally biased stretch (polar residues) spans 405 to 426 (NQYNQYRNSNGSQPRAQPANDQ).

In terms of biological role, required for G2/M phase checkpoint control. The protein is Protein sum2 (sum2) of Schizosaccharomyces pombe (strain 972 / ATCC 24843) (Fission yeast).